The sequence spans 1070 residues: DNA-directed RNA polymerase subunit beta (1070 aa).

This sequence belongs to the RNA polymerase beta chain family. In plastids the minimal PEP RNA polymerase catalytic core is composed of four subunits: alpha, beta, beta', and beta''. When a (nuclear-encoded) sigma factor is associated with the core the holoenzyme is formed, which can initiate transcription.

It is found in the plastid. It localises to the chloroplast. The enzyme catalyses RNA(n) + a ribonucleoside 5'-triphosphate = RNA(n+1) + diphosphate. DNA-dependent RNA polymerase catalyzes the transcription of DNA into RNA using the four ribonucleoside triphosphates as substrates. The sequence is that of DNA-directed RNA polymerase subunit beta from Citrus sinensis (Sweet orange).